The sequence spans 390 residues: GTPase Obg (390 aa).

The Obg domain maps to 1–159 (MKFIDESLIR…RDLLLELMLL (159 aa)). The OBG-type G domain occupies 160-333 (ADVGMLGLPN…LCRDIMDFII (174 aa)). GTP contacts are provided by residues 166 to 173 (GLPNAGKS), 191 to 195 (FTTLV), 213 to 216 (DIPG), 283 to 286 (NKID), and 314 to 316 (SAA). Mg(2+) contacts are provided by Ser-173 and Thr-193.

Belongs to the TRAFAC class OBG-HflX-like GTPase superfamily. OBG GTPase family. Monomer. The cofactor is Mg(2+).

It localises to the cytoplasm. Its function is as follows. An essential GTPase which binds GTP, GDP and possibly (p)ppGpp with moderate affinity, with high nucleotide exchange rates and a fairly low GTP hydrolysis rate. Plays a role in control of the cell cycle, stress response, ribosome biogenesis and in those bacteria that undergo differentiation, in morphogenesis control. The sequence is that of GTPase Obg from Haemophilus influenzae (strain 86-028NP).